The chain runs to 276 residues: N-alpha-acetyltransferase 60 (276 aa).

The 206-residue stretch at 34 to 239 folds into the N-acetyltransferase domain; the sequence is VQLRFLVPDD…WTLLDHIKHY (206 aa). Residue tyrosine 59 participates in substrate binding. The active site involves tyrosine 139. Leucine 141 provides a ligand contact to substrate. Residues 143 to 145 and 151 to 156 each bind acetyl-CoA; these read LGV and RNGIGS. Histidine 180 is an active-site residue. Acetyl-CoA-binding positions include asparagine 185 and 192 to 195; that span reads YEKR. The tract at residues 204 to 215 is required for homodimerization; sequence PYYYNIRGKGKD. Tyrosine 207 contacts substrate.

The protein belongs to the acetyltransferase family. NAA60 subfamily.

It catalyses the reaction N-terminal L-methionyl-[transmembrane protein] + acetyl-CoA = N-terminal N(alpha)-acetyl-L-methionyl-[transmembrane protein] + CoA + H(+). The catalysed reaction is L-lysyl-[protein] + acetyl-CoA = N(6)-acetyl-L-lysyl-[protein] + CoA + H(+). In terms of biological role, displays alpha (N-terminal) acetyltransferase activity towards a range of N-terminal sequences including those starting with Met-Lys, Met-Val, Met-Ala and Met-Met. Required for normal chromosomal segregation during anaphase. Its function is as follows. Shows histone acetyltransferase activity toward free histones. Does not show histone acetyltransferase activity toward free histones. This is N-alpha-acetyltransferase 60 from Drosophila melanogaster (Fruit fly).